A 158-amino-acid polypeptide reads, in one-letter code: SsrA-binding protein (158 aa).

The tract at residues 131–158 is disordered; it reads GKKTHDKRETEKKRDWNREKARLLRDRG. The segment covering 136 to 158 has biased composition (basic and acidic residues); it reads DKRETEKKRDWNREKARLLRDRG.

The protein belongs to the SmpB family.

It is found in the cytoplasm. In terms of biological role, required for rescue of stalled ribosomes mediated by trans-translation. Binds to transfer-messenger RNA (tmRNA), required for stable association of tmRNA with ribosomes. tmRNA and SmpB together mimic tRNA shape, replacing the anticodon stem-loop with SmpB. tmRNA is encoded by the ssrA gene; the 2 termini fold to resemble tRNA(Ala) and it encodes a 'tag peptide', a short internal open reading frame. During trans-translation Ala-aminoacylated tmRNA acts like a tRNA, entering the A-site of stalled ribosomes, displacing the stalled mRNA. The ribosome then switches to translate the ORF on the tmRNA; the nascent peptide is terminated with the 'tag peptide' encoded by the tmRNA and targeted for degradation. The ribosome is freed to recommence translation, which seems to be the essential function of trans-translation. This is SsrA-binding protein from Brucella ovis (strain ATCC 25840 / 63/290 / NCTC 10512).